The sequence spans 426 residues: Serine--tRNA ligase (426 aa).

Position 231–233 (231–233 (TAE)) interacts with L-serine. Residues 262–264 (RRE) and Val-278 each bind ATP. Glu-285 is a binding site for L-serine. 349 to 352 (EVSS) lines the ATP pocket. Ser-384 lines the L-serine pocket.

Belongs to the class-II aminoacyl-tRNA synthetase family. Type-1 seryl-tRNA synthetase subfamily. In terms of assembly, homodimer. The tRNA molecule binds across the dimer.

Its subcellular location is the cytoplasm. It catalyses the reaction tRNA(Ser) + L-serine + ATP = L-seryl-tRNA(Ser) + AMP + diphosphate + H(+). The catalysed reaction is tRNA(Sec) + L-serine + ATP = L-seryl-tRNA(Sec) + AMP + diphosphate + H(+). Its pathway is aminoacyl-tRNA biosynthesis; selenocysteinyl-tRNA(Sec) biosynthesis; L-seryl-tRNA(Sec) from L-serine and tRNA(Sec): step 1/1. Its function is as follows. Catalyzes the attachment of serine to tRNA(Ser). Is also able to aminoacylate tRNA(Sec) with serine, to form the misacylated tRNA L-seryl-tRNA(Sec), which will be further converted into selenocysteinyl-tRNA(Sec). In Chlamydia caviae (strain ATCC VR-813 / DSM 19441 / 03DC25 / GPIC) (Chlamydophila caviae), this protein is Serine--tRNA ligase.